A 348-amino-acid polypeptide reads, in one-letter code: Fe(3+) ions import ATP-binding protein FbpC (348 aa).

The 231-residue stretch at 7–237 folds into the ABC transporter domain; sequence VELRNVTKRF…PASRFMASFM (231 aa). An ATP-binding site is contributed by 39 to 46; it reads GPSGCGKT.

It belongs to the ABC transporter superfamily. Fe(3+) ion importer (TC 3.A.1.10) family. As to quaternary structure, the complex is composed of two ATP-binding proteins (FbpC), two transmembrane proteins (FbpB) and a solute-binding protein (FbpA).

It is found in the cell inner membrane. The catalysed reaction is Fe(3+)(out) + ATP + H2O = Fe(3+)(in) + ADP + phosphate + H(+). In terms of biological role, part of the ABC transporter complex FbpABC involved in Fe(3+) ions import. Responsible for energy coupling to the transport system. The protein is Fe(3+) ions import ATP-binding protein FbpC of Escherichia coli O157:H7.